Reading from the N-terminus, the 295-residue chain is 4-hydroxy-tetrahydrodipicolinate synthase (295 aa).

Thr47 is a pyruvate binding site. The Proton donor/acceptor role is filled by Tyr135. Catalysis depends on Lys163, which acts as the Schiff-base intermediate with substrate. Ile204 contacts pyruvate.

The protein belongs to the DapA family. In terms of assembly, homotetramer; dimer of dimers.

The protein resides in the cytoplasm. It carries out the reaction L-aspartate 4-semialdehyde + pyruvate = (2S,4S)-4-hydroxy-2,3,4,5-tetrahydrodipicolinate + H2O + H(+). Its pathway is amino-acid biosynthesis; L-lysine biosynthesis via DAP pathway; (S)-tetrahydrodipicolinate from L-aspartate: step 3/4. In terms of biological role, catalyzes the condensation of (S)-aspartate-beta-semialdehyde [(S)-ASA] and pyruvate to 4-hydroxy-tetrahydrodipicolinate (HTPA). The chain is 4-hydroxy-tetrahydrodipicolinate synthase from Caldicellulosiruptor saccharolyticus (strain ATCC 43494 / DSM 8903 / Tp8T 6331).